The chain runs to 114 residues: Cholecystokinin (114 aa).

A signal peptide spans 1–20 (MNGGLCLCVLMAVLAAGTLA). Tyr-96 carries the post-translational modification Sulfotyrosine. Phe-102 carries the phenylalanine amide modification. The propeptide occupies 106–114 (SAEEYEYTS). Residues Tyr-110 and Tyr-112 each carry the sulfotyrosine modification.

The protein belongs to the gastrin/cholecystokinin family. As to quaternary structure, binds to CCK-A receptors in the pancreas and CCK-B receptors in the brain. Post-translationally, the precursor is cleaved by proteases to produce a number of active cholecystokinins. Brain contains CCK-octapeptide (CCK8) and several CCK-desoctapeptides; whereas pig gut contains intact CCK33, CCK39, and CCK58 as well as CCK-octapeptide and the CCK-desoctapeptides. Distribution differences are due to tissue-specific post-translational processing events. The precursor is cleaved by ACE, which removes the Gly-Arg-Arg peptide at the C-terminus, leading to mature hormone. As to expression, synthesized in both cerebral cortex and duodenal mucosa.

It is found in the secreted. This peptide hormone induces gall bladder contraction and the release of pancreatic enzymes in the gut. Its function in the brain is not clear. Binding to CCK-A receptors stimulates amylase release from the pancreas, binding to CCK-B receptors stimulates gastric acid secretion. This chain is Cholecystokinin (CCK), found in Sus scrofa (Pig).